We begin with the raw amino-acid sequence, 375 residues long: Growth/differentiation factor 8 (375 aa).

The first 23 residues, 1–23 (MQKIVVYVYIYLFVQISVDPVAL), serve as a signal peptide directing secretion. A propeptide spanning residues 24 to 266 (DGSSQPTENT…VTDTPKRSRR (243 aa)) is cleaved from the precursor. Residue N71 is glycosylated (N-linked (GlcNAc...) asparagine). 4 disulfide bridges follow: C272/C282, C281/C340, C309/C372, and C313/C374.

This sequence belongs to the TGF-beta family. As to quaternary structure, homodimer; disulfide-linked.

The protein resides in the secreted. Its function is as follows. Acts specifically as a negative regulator of skeletal muscle growth. The chain is Growth/differentiation factor 8 (MSTN) from Coturnix coturnix (Common quail).